A 715-amino-acid chain; its full sequence is Patatin-like phospholipase domain-containing protein ATEG_02594 (715 aa).

The helical transmembrane segment at 84-104 (WPFLAFVLGWISFLGVAYILT) threads the bilayer. The PNPLA domain occupies 274–465 (LCLSGGATFA…RTDIPIKALN (192 aa)). The GXSXG signature appears at 305–309 (GTSGG). Residue serine 307 is the Nucleophile of the active site. Aspartate 452 (proton acceptor) is an active-site residue. The tract at residues 613 to 715 (TAPRGGGRAT…DVDSDTWKGQ (103 aa)) is disordered. Positions 652–661 (RTGEYSKEAD) are enriched in basic and acidic residues. Polar residues predominate over residues 665–678 (AEMSDSSGVDSATA).

Belongs to the PLPL family.

Its subcellular location is the membrane. In terms of biological role, probable lipid hydrolase. The polypeptide is Patatin-like phospholipase domain-containing protein ATEG_02594 (Aspergillus terreus (strain NIH 2624 / FGSC A1156)).